We begin with the raw amino-acid sequence, 287 residues long: Small ribosomal subunit biogenesis GTPase RsgA (287 aa).

Residues 61–218 (SSELIRPTVA…LVDTPGFTTL (158 aa)) enclose the CP-type G domain. GTP contacts are provided by residues 110-113 (NKED) and 161-169 (GPSGAGKST). Zn(2+) is bound by residues cysteine 242, cysteine 247, histidine 249, and cysteine 255.

The protein belongs to the TRAFAC class YlqF/YawG GTPase family. RsgA subfamily. In terms of assembly, monomer. Associates with 30S ribosomal subunit, binds 16S rRNA. The cofactor is Zn(2+).

Its subcellular location is the cytoplasm. In terms of biological role, one of several proteins that assist in the late maturation steps of the functional core of the 30S ribosomal subunit. Helps release RbfA from mature subunits. May play a role in the assembly of ribosomal proteins into the subunit. Circularly permuted GTPase that catalyzes slow GTP hydrolysis, GTPase activity is stimulated by the 30S ribosomal subunit. The chain is Small ribosomal subunit biogenesis GTPase RsgA from Clostridium perfringens (strain 13 / Type A).